Here is a 318-residue protein sequence, read N- to C-terminus: Replication factor C small subunit (318 aa).

Residue 43 to 50 (GPAGTGKT) participates in ATP binding.

This sequence belongs to the activator 1 small subunits family. RfcS subfamily. In terms of assembly, heteromultimer composed of small subunits (RfcS) and large subunits (RfcL).

In terms of biological role, part of the RFC clamp loader complex which loads the PCNA sliding clamp onto DNA. This Picrophilus torridus (strain ATCC 700027 / DSM 9790 / JCM 10055 / NBRC 100828 / KAW 2/3) protein is Replication factor C small subunit.